A 419-amino-acid chain; its full sequence is Histidine--tRNA ligase (419 aa).

This sequence belongs to the class-II aminoacyl-tRNA synthetase family. As to quaternary structure, homodimer.

The protein resides in the cytoplasm. It carries out the reaction tRNA(His) + L-histidine + ATP = L-histidyl-tRNA(His) + AMP + diphosphate + H(+). The polypeptide is Histidine--tRNA ligase (Desulforamulus reducens (strain ATCC BAA-1160 / DSM 100696 / MI-1) (Desulfotomaculum reducens)).